Here is a 138-residue protein sequence, read N- to C-terminus: uncharacterized protein (138 aa).

The tract at residues 1-27 is disordered; that stretch reads MEGELIENNGLDIYDTSETPKKRGRPA.

This is an uncharacterized protein from Escherichia coli (strain K12).